Here is a 651-residue protein sequence, read N- to C-terminus: L-type lectin-domain containing receptor kinase IX.1 (651 aa).

Positions 1 to 19 (MANSILLFSFVLVLPFVCS) are cleaved as a signal peptide. The interval 20–251 (VQFNISRFGS…GNRLLSWEFS (232 aa)) is legume-lectin like. Residues 20 to 269 (VQFNISRFGS…KKSQNDKKGM (250 aa)) are Extracellular-facing. 8 N-linked (GlcNAc...) asparagine glycosylation sites follow: N23, N125, N129, N162, N169, N174, N195, and N211. A helical membrane pass occupies residues 270–290 (IIGISVSGFVLLTFFITSLIV). Residues 291–651 (FLKRKQQKKK…VTFSSAQHGR (361 aa)) lie on the Cytoplasmic side of the membrane. The 282-residue stretch at 335–616 (FADDRKLGEG…LNLEAPVPHL (282 aa)) folds into the Protein kinase domain. Residues 341–349 (LGEGGFGAV) and K364 contribute to the ATP site. The Proton acceptor role is filled by D459. The segment at 630 to 651 (SNTTSVSSGGATVTFSSAQHGR) is disordered.

This sequence in the C-terminal section; belongs to the protein kinase superfamily. Ser/Thr protein kinase family. The protein in the N-terminal section; belongs to the leguminous lectin family. As to quaternary structure, interacts with ABCG40.

The protein resides in the cell membrane. The catalysed reaction is L-seryl-[protein] + ATP = O-phospho-L-seryl-[protein] + ADP + H(+). It carries out the reaction L-threonyl-[protein] + ATP = O-phospho-L-threonyl-[protein] + ADP + H(+). Functionally, promotes hydrogen peroxide H(2)O(2) production and cell death. In terms of biological role, involved in resistance response to the pathogenic oomycetes Phytophthora infestans and Phytophthora capsici. The protein is L-type lectin-domain containing receptor kinase IX.1 of Arabidopsis thaliana (Mouse-ear cress).